Reading from the N-terminus, the 371-residue chain is tRNA-specific 2-thiouridylase MnmA (371 aa).

ATP contacts are provided by residues 13 to 20 (GMSGGVDS) and M39. The segment at 99-101 (NPD) is interaction with target base in tRNA. The active-site Nucleophile is the C104. A disulfide bridge connects residues C104 and C200. G128 is a binding site for ATP. Residues 150-152 (KDQ) form an interaction with tRNA region. The active-site Cysteine persulfide intermediate is the C200. Residues 308–309 (RY) are interaction with tRNA.

It belongs to the MnmA/TRMU family.

The protein localises to the cytoplasm. The catalysed reaction is S-sulfanyl-L-cysteinyl-[protein] + uridine(34) in tRNA + AH2 + ATP = 2-thiouridine(34) in tRNA + L-cysteinyl-[protein] + A + AMP + diphosphate + H(+). Its function is as follows. Catalyzes the 2-thiolation of uridine at the wobble position (U34) of tRNA, leading to the formation of s(2)U34. The polypeptide is tRNA-specific 2-thiouridylase MnmA (Bacillus anthracis).